The primary structure comprises 782 residues: Semaphorin-3G (782 aa).

An N-terminal signal peptide occupies residues 1 to 22 (MAPSAWAICWLLGGLLLHGGSS). Residues 32–519 (RLRLSYRDLL…SRLGVAQLRL (488 aa)) enclose the Sema domain. Asn-44 is a glycosylation site (N-linked (GlcNAc...) asparagine). Cys-105 and Cys-116 are joined by a disulfide. The N-linked (GlcNAc...) asparagine glycan is linked to Asn-127. 5 disulfides stabilise this stretch: Cys-134–Cys-143, Cys-270–Cys-382, Cys-294–Cys-342, Cys-522–Cys-540, and Cys-603–Cys-655. The 103-residue stretch at 569–671 (PALQCLGQSQ…FSQTVVRLAL (103 aa)) folds into the Ig-like C2-type domain.

It belongs to the semaphorin family.

The protein resides in the secreted. In terms of biological role, has chemorepulsive activities for sympathetic axons. Ligand of NRP2. The polypeptide is Semaphorin-3G (SEMA3G) (Homo sapiens (Human)).